Here is a 591-residue protein sequence, read N- to C-terminus: V-type ATP synthase alpha chain (591 aa).

ATP is bound at residue 233–240 (GPFGAGKT).

The protein belongs to the ATPase alpha/beta chains family.

The enzyme catalyses ATP + H2O + 4 H(+)(in) = ADP + phosphate + 5 H(+)(out). Functionally, produces ATP from ADP in the presence of a proton gradient across the membrane. The V-type alpha chain is a catalytic subunit. This chain is V-type ATP synthase alpha chain, found in Streptococcus pyogenes serotype M3 (strain ATCC BAA-595 / MGAS315).